We begin with the raw amino-acid sequence, 281 residues long: Polyamine aminopropyltransferase (281 aa).

Residues 2-236 (DLWLKEGQIS…GYWSFTIGSK (235 aa)) enclose the PABS domain. Residue glutamine 31 participates in S-methyl-5'-thioadenosine binding. Histidine 62 and aspartate 86 together coordinate spermidine. S-methyl-5'-thioadenosine-binding positions include glutamate 106 and 138–139 (DG). Aspartate 156 serves as the catalytic Proton acceptor. 156–159 (DSTD) is a spermidine binding site.

Belongs to the spermidine/spermine synthase family. In terms of assembly, homodimer or homotetramer.

It is found in the cytoplasm. It catalyses the reaction S-adenosyl 3-(methylsulfanyl)propylamine + putrescine = S-methyl-5'-thioadenosine + spermidine + H(+). It functions in the pathway amine and polyamine biosynthesis; spermidine biosynthesis; spermidine from putrescine: step 1/1. In terms of biological role, catalyzes the irreversible transfer of a propylamine group from the amino donor S-adenosylmethioninamine (decarboxy-AdoMet) to putrescine (1,4-diaminobutane) to yield spermidine. The sequence is that of Polyamine aminopropyltransferase from Clostridium tetani (strain Massachusetts / E88).